A 331-amino-acid chain; its full sequence is Thiamine thiazole synthase (331 aa).

Substrate is bound by residues Cys-86, Glu-107 to Ala-108, Gly-115, and Val-183. Cys-220 is subject to 2,3-didehydroalanine (Cys). Residues Asp-222, His-237, Met-289, and Arg-299 to Gly-301 contribute to the substrate site.

Belongs to the THI4 family. As to quaternary structure, homooctamer. Fe cation serves as cofactor. In terms of processing, during the catalytic reaction, a sulfide is transferred from Cys-220 to a reaction intermediate, generating a dehydroalanine residue.

Its subcellular location is the cytoplasm. The protein resides in the nucleus. The enzyme catalyses [ADP-thiazole synthase]-L-cysteine + glycine + NAD(+) = [ADP-thiazole synthase]-dehydroalanine + ADP-5-ethyl-4-methylthiazole-2-carboxylate + nicotinamide + 3 H2O + 2 H(+). Functionally, involved in biosynthesis of the thiamine precursor thiazole. Catalyzes the conversion of NAD and glycine to adenosine diphosphate 5-(2-hydroxyethyl)-4-methylthiazole-2-carboxylic acid (ADT), an adenylated thiazole intermediate. The reaction includes an iron-dependent sulfide transfer from a conserved cysteine residue of the protein to a thiazole intermediate. The enzyme can only undergo a single turnover, which suggests it is a suicide enzyme. May have additional roles in adaptation to various stress conditions and in DNA damage tolerance. The chain is Thiamine thiazole synthase from Emericella nidulans (strain FGSC A4 / ATCC 38163 / CBS 112.46 / NRRL 194 / M139) (Aspergillus nidulans).